A 567-amino-acid chain; its full sequence is Proline--tRNA ligase (567 aa).

The protein belongs to the class-II aminoacyl-tRNA synthetase family. ProS type 1 subfamily. As to quaternary structure, homodimer.

The protein localises to the cytoplasm. The catalysed reaction is tRNA(Pro) + L-proline + ATP = L-prolyl-tRNA(Pro) + AMP + diphosphate. Catalyzes the attachment of proline to tRNA(Pro) in a two-step reaction: proline is first activated by ATP to form Pro-AMP and then transferred to the acceptor end of tRNA(Pro). As ProRS can inadvertently accommodate and process non-cognate amino acids such as alanine and cysteine, to avoid such errors it has two additional distinct editing activities against alanine. One activity is designated as 'pretransfer' editing and involves the tRNA(Pro)-independent hydrolysis of activated Ala-AMP. The other activity is designated 'posttransfer' editing and involves deacylation of mischarged Ala-tRNA(Pro). The misacylated Cys-tRNA(Pro) is not edited by ProRS. This is Proline--tRNA ligase from Streptomyces griseus subsp. griseus (strain JCM 4626 / CBS 651.72 / NBRC 13350 / KCC S-0626 / ISP 5235).